The following is a 426-amino-acid chain: MAGIKDFPKFGALAGLKILDSGSNIAGPLGGGLLAECGATVIHFEGPKKPDNQRGWYGYPQNHRNQLSMVADIKSEEGRKIFLDLIKWADIWVESSKGGQYDRLGLSDEVIWEVNPKIAIVHVSGYGQTGDPSYVTRASYDAVGQAFSGYMSLNGTTEALKINPYLSDFVCGLTTCWAMLACYVSTILTGKGESVDVAQYEALARIMDGRMIQYATDGVKMPRTGNKDAQAALFSFYTCKDGRTIFIGMTGAEVCKRGFPIIGLPVPGTGDPDFPEGFTGWMIYTPVGQRMEKAMEKYVSEHTMEEVEAEMQAHQIPCQRVYELEDCLNDPHWKARGTITEWDDPMMGHITGLGLINKFKRNPSEIWRGAPLFGMDNRDILKDLGYDDAKIDELYEQGIVNEFDLDTTIKRYRLDEVIPHMRKKEE.

The Nucleophile role is filled by aspartate 168.

This sequence belongs to the CoA-transferase III family.

The catalysed reaction is lithocholoyl-CoA + cholate = choloyl-CoA + lithocholate. It carries out the reaction deoxycholoyl-CoA + cholate = choloyl-CoA + deoxycholate. It catalyses the reaction allodeoxycholoyl-CoA + cholate = allodeoxycholate + choloyl-CoA. The enzyme catalyses allocholate + deoxycholoyl-CoA = allocholoyl-CoA + deoxycholate. The catalysed reaction is allocholate + lithocholoyl-CoA = allocholoyl-CoA + lithocholate. It carries out the reaction allocholate + allodeoxycholoyl-CoA = allocholoyl-CoA + allodeoxycholate. It catalyses the reaction lithocholoyl-CoA + chenodeoxycholate = chenodeoxycholoyl-CoA + lithocholate. The enzyme catalyses ursodeoxycholate + deoxycholoyl-CoA = ursodeoxycholoyl-CoA + deoxycholate. The catalysed reaction is ursodeoxycholate + lithocholoyl-CoA = ursodeoxycholoyl-CoA + lithocholate. It carries out the reaction allodeoxycholoyl-CoA + ursodeoxycholate = ursodeoxycholoyl-CoA + allodeoxycholate. It catalyses the reaction beta-muricholate + lithocholoyl-CoA = beta-muricholoyl-CoA + lithocholate. The enzyme catalyses beta-muricholate + deoxycholoyl-CoA = beta-muricholoyl-CoA + deoxycholate. The catalysed reaction is beta-muricholate + allodeoxycholoyl-CoA = beta-muricholoyl-CoA + allodeoxycholate. It carries out the reaction choloyl-CoA + H2O = cholate + CoA + H(+). It catalyses the reaction chenodeoxycholoyl-CoA + H2O = chenodeoxycholate + CoA + H(+). Its pathway is lipid metabolism; bile acid biosynthesis. Functionally, functions in the bile acid 7alpha-dehydroxylation pathway, which forms secondary bile acids via the 7alpha-dehydroxylation of primary bile acids, and is carried out by intestinal anaerobic bacteria. Acts as a bile acid CoA transferase with broad bile acid substrate specificity. Catalyzes the transfer of the CoA moiety of secondary bile acid-CoA compounds to primary bile acids. Can use lithocholoyl-CoA, deoxycholoyl-CoA and allodeoxycholoyl-CoA as bile acid CoA donors and cholate, allocholate, chenodeoxycholate, ursodeoxycholate, and beta-muricholate as bile acid CoA acceptors. Also displays CoA hydrolase activity, being able to catalyze the hydrolysis of choloyl-CoA, 3-dehydrocholoyl-CoA, and chenodeoxycholoyl-CoA, releasing CoA and the corresponding free bile acid. However, this latter activity may not represent the actual activity of this enzyme, since using a transferase rather than hydrolase, the bacteria conserve the thioester bond energy, saving ATP molecules. Shows no hydrolytic activity with acetyl-CoA, isovaleryl-CoA, palmitoyl-CoA, or phenylacetyl-CoA as substrates. In Clostridium scindens (strain JCM 10418 / VPI 12708), this protein is Bile acid CoA-transferase BaiF.